Consider the following 207-residue polypeptide: Large ribosomal subunit protein uL4 (207 aa).

Residues 48 to 89 (THKVKNRSEVSGGGRKPWRQKGTGRARQGSIRSPQWRGGGTV) are disordered.

The protein belongs to the universal ribosomal protein uL4 family. Part of the 50S ribosomal subunit.

Its function is as follows. One of the primary rRNA binding proteins, this protein initially binds near the 5'-end of the 23S rRNA. It is important during the early stages of 50S assembly. It makes multiple contacts with different domains of the 23S rRNA in the assembled 50S subunit and ribosome. Forms part of the polypeptide exit tunnel. In Bacillus cytotoxicus (strain DSM 22905 / CIP 110041 / 391-98 / NVH 391-98), this protein is Large ribosomal subunit protein uL4.